The primary structure comprises 380 residues: Alanine racemase (380 aa).

The Proton acceptor; specific for D-alanine role is filled by K41. K41 is subject to N6-(pyridoxal phosphate)lysine. R141 lines the substrate pocket. The active-site Proton acceptor; specific for L-alanine is Y271. Residue M318 coordinates substrate.

Belongs to the alanine racemase family. It depends on pyridoxal 5'-phosphate as a cofactor.

The catalysed reaction is L-alanine = D-alanine. It functions in the pathway amino-acid biosynthesis; D-alanine biosynthesis; D-alanine from L-alanine: step 1/1. Catalyzes the interconversion of L-alanine and D-alanine. May also act on other amino acids. This is Alanine racemase (alr) from Latilactobacillus sakei subsp. sakei (strain 23K) (Lactobacillus sakei subsp. sakei).